The primary structure comprises 39 residues: Photosystem II reaction center protein Y (39 aa).

The chain crosses the membrane as a helical span at residues 4–24 (RVIVVVSPLLIAATWAAINIG).

Belongs to the PsbY family. In terms of assembly, PSII is composed of 1 copy each of membrane proteins PsbA, PsbB, PsbC, PsbD, PsbE, PsbF, PsbH, PsbI, PsbJ, PsbK, PsbL, PsbM, PsbT, PsbX, PsbY, PsbZ, Psb30/Ycf12, peripheral proteins PsbO, CyanoQ (PsbQ), PsbU, PsbV and a large number of cofactors. It forms dimeric complexes.

It is found in the cellular thylakoid membrane. Loosely associated component of the core of photosystem II (PSII), it is not always seen in crystals. PSII is a light-driven water plastoquinone oxidoreductase, using light energy to abstract electrons from H(2)O, generating a proton gradient subsequently used for ATP formation. This Synechocystis sp. (strain ATCC 27184 / PCC 6803 / Kazusa) protein is Photosystem II reaction center protein Y.